Reading from the N-terminus, the 275-residue chain is Shikimate dehydrogenase (NADP(+)) (275 aa).

Shikimate-binding positions include 19 to 21 and Thr66; that span reads SIS. Lys70 serves as the catalytic Proton acceptor. Glu82 lines the NADP(+) pocket. Shikimate-binding residues include Asn91 and Asp106. Residues 129-133, 153-158, and Ile219 contribute to the NADP(+) site; these read GAGGA and NRTYER. Tyr221 contributes to the shikimate binding site. NADP(+) is bound at residue Gly242.

This sequence belongs to the shikimate dehydrogenase family. Homodimer.

It catalyses the reaction shikimate + NADP(+) = 3-dehydroshikimate + NADPH + H(+). The protein operates within metabolic intermediate biosynthesis; chorismate biosynthesis; chorismate from D-erythrose 4-phosphate and phosphoenolpyruvate: step 4/7. In terms of biological role, involved in the biosynthesis of the chorismate, which leads to the biosynthesis of aromatic amino acids. Catalyzes the reversible NADPH linked reduction of 3-dehydroshikimate (DHSA) to yield shikimate (SA). This chain is Shikimate dehydrogenase (NADP(+)), found in Dictyoglomus turgidum (strain DSM 6724 / Z-1310).